Here is a 634-residue protein sequence, read N- to C-terminus: Probable potassium transport system protein Kup 1 (634 aa).

12 helical membrane passes run 20 to 40 (FLTL…TSPL), 64 to 84 (VMSL…VLLI), 110 to 130 (FAAI…DAII), 148 to 168 (PVFD…LFVV), 176 to 196 (VAAW…LGGI), 224 to 244 (AGLL…ALYA), 256 to 276 (FAWF…QGAM), 290 to 310 (FLFP…ATII), 348 to 368 (IYIP…VFAF), 377 to 397 (AYGI…YFVM), 405 to 425 (VATS…FLMA), and 430 to 450 (IFEG…VMIT).

It belongs to the HAK/KUP transporter (TC 2.A.72) family.

It localises to the cell inner membrane. The catalysed reaction is K(+)(in) + H(+)(in) = K(+)(out) + H(+)(out). Transport of potassium into the cell. Likely operates as a K(+):H(+) symporter. The chain is Probable potassium transport system protein Kup 1 from Rhodopseudomonas palustris (strain BisB5).